We begin with the raw amino-acid sequence, 292 residues long: Poly(U)-specific endoribonuclease-A (292 aa).

The 278-residue stretch at 8–285 (LNHELSKLFN…IGTAYPVLLS (278 aa)) folds into the EndoU domain. Catalysis depends on residues H162, H178, and K224.

Belongs to the ENDOU family. As to quaternary structure, monomer. Mn(2+) is required as a cofactor.

It is found in the nucleus. It carries out the reaction uridylyl-uridylyl-ribonucleotide-RNA = a 3'-end uridylyl-2',3'-cyclophospho-uridine-RNA + a 5'-end dephospho-ribonucleoside-RNA. Functionally, poly(U)-specific endoribonuclease involved in the processing of intron-encoded box C/D snoRNAs, such as U16 and U86. Releases products that have 2',3'-cyclic phosphate termini at the 3'-end. The polypeptide is Poly(U)-specific endoribonuclease-A (endou-a) (Xenopus laevis (African clawed frog)).